The chain runs to 237 residues: Small ribosomal subunit protein uS2m (237 aa).

Belongs to the universal ribosomal protein uS2 family.

Its subcellular location is the mitochondrion. This chain is Small ribosomal subunit protein uS2m (RPS2), found in Marchantia polymorpha (Common liverwort).